A 94-amino-acid chain; its full sequence is Aspartyl/glutamyl-tRNA(Asn/Gln) amidotransferase subunit C (94 aa).

Belongs to the GatC family. In terms of assembly, heterotrimer of A, B and C subunits.

The enzyme catalyses L-glutamyl-tRNA(Gln) + L-glutamine + ATP + H2O = L-glutaminyl-tRNA(Gln) + L-glutamate + ADP + phosphate + H(+). It catalyses the reaction L-aspartyl-tRNA(Asn) + L-glutamine + ATP + H2O = L-asparaginyl-tRNA(Asn) + L-glutamate + ADP + phosphate + 2 H(+). Functionally, allows the formation of correctly charged Asn-tRNA(Asn) or Gln-tRNA(Gln) through the transamidation of misacylated Asp-tRNA(Asn) or Glu-tRNA(Gln) in organisms which lack either or both of asparaginyl-tRNA or glutaminyl-tRNA synthetases. The reaction takes place in the presence of glutamine and ATP through an activated phospho-Asp-tRNA(Asn) or phospho-Glu-tRNA(Gln). This Desulfotalea psychrophila (strain LSv54 / DSM 12343) protein is Aspartyl/glutamyl-tRNA(Asn/Gln) amidotransferase subunit C.